The sequence spans 186 residues: LIM domain-containing protein DDB_G0271356 (186 aa).

LIM zinc-binding domains lie at 7–67, 68–127, and 128–186; these read PECY…DKFA, PKCQ…KIGF, and LCRH…KLYG.

In Dictyostelium discoideum (Social amoeba), this protein is LIM domain-containing protein DDB_G0271356.